Consider the following 642-residue polypeptide: Serotransferrin (642 aa).

2 Transferrin-like domains span residues 1 to 280 (GIKE…SLKK) and 290 to 621 (IKWC…SLRQ). The Fe(3+) site is built by aspartate 25 and tyrosine 54. Intrachain disulfides connect cysteine 77–cysteine 158, cysteine 121–cysteine 137, and cysteine 186–cysteine 200. Threonine 79, lysine 83, alanine 85, and glycine 86 together coordinate hydrogencarbonate. Tyrosine 152 serves as a coordination point for Fe(3+). Histidine 208 contributes to the Fe(3+) binding site. Disulfide bonds link cysteine 293–cysteine 329 and cysteine 303–cysteine 320. Aspartate 344 lines the Fe(3+) pocket. Disulfide bonds link cysteine 354-cysteine 633, cysteine 369-cysteine 594, cysteine 402-cysteine 480, cysteine 426-cysteine 622, cysteine 436-cysteine 450, cysteine 447-cysteine 463, and cysteine 520-cysteine 535. Residue asparagine 365 is glycosylated (N-linked (GlcNAc...) asparagine). Tyrosine 379 contributes to the Fe(3+) binding site. Residues threonine 404, arginine 408, alanine 410, and glycine 411 each contribute to the hydrogencarbonate site. Fe(3+) is bound at residue tyrosine 474. Histidine 543 lines the Fe(3+) pocket.

The protein belongs to the transferrin family. Monomer. Brain and liver; to a lesser extent in kidney and heart.

It localises to the secreted. Functionally, transferrins are iron binding transport proteins which can bind two Fe(3+) ions in association with the binding of an anion, usually bicarbonate. This Gadus morhua (Atlantic cod) protein is Serotransferrin (tf).